Here is a 131-residue protein sequence, read N- to C-terminus: Glycine cleavage system H protein (131 aa).

One can recognise a Lipoyl-binding domain in the interval T24 to Q106. At K65 the chain carries N6-lipoyllysine.

It belongs to the GcvH family. In terms of assembly, the glycine cleavage system is composed of four proteins: P, T, L and H. The cofactor is (R)-lipoate.

The glycine cleavage system catalyzes the degradation of glycine. The H protein shuttles the methylamine group of glycine from the P protein to the T protein. The chain is Glycine cleavage system H protein from Mycobacterium sp. (strain JLS).